The sequence spans 387 residues: Acyl-[acyl-carrier-protein] 6-desaturase (387 aa).

A chloroplast-targeting transit peptide spans 1–29; the sequence is MALVFKSIGAHKTPPCTLNLASPALYHTR. Residues glutamate 131, glutamate 169, histidine 172, glutamate 222, glutamate 255, and histidine 258 each contribute to the Fe cation site.

It belongs to the fatty acid desaturase type 2 family. It depends on Fe(2+) as a cofactor.

The protein localises to the plastid. It is found in the chloroplast. The enzyme catalyses hexadecanoyl-[ACP] + 2 reduced [2Fe-2S]-[ferredoxin] + O2 + 2 H(+) = (6Z)-hexadecenoyl-[ACP] + 2 oxidized [2Fe-2S]-[ferredoxin] + 2 H2O. It functions in the pathway lipid metabolism; fatty acid metabolism. With respect to regulation, inhibited by KCN or H(2)O(2). In terms of biological role, delta(6) fatty acid desaturase introducing a cis double bond at carbon 6 of palmitoyl-[acyl-carrier protein](16:0-ACP), producing 16:1(6Z)-ACP. No activity with the coenzyme A ester of the fatty acid. The position of the double bond is determined by its distance from the carboxyl end of the fatty acid. Low activity with several saturated acyl-[acyl-carrier protein]s, including 14:0-ACP and 18:0-ACP. Requires reduced ferredoxin for detectable in vitro activity. The protein is Acyl-[acyl-carrier-protein] 6-desaturase of Thunbergia alata (Black-eyed Susan vine).